The primary structure comprises 1429 residues: Probable ATP-dependent RNA helicase spindle-E (1429 aa).

Residues 121–288 (VNAINTHQVV…FSTKVSVPPV (168 aa)) enclose the Helicase ATP-binding domain. 134–141 (GETGCGKT) serves as a coordination point for ATP. Positions 234-237 (DEVH) match the DEAH box motif. In terms of domain architecture, Helicase C-terminal spans 349–521 (QSEQSYDDAK…NSVLKAKLLD (173 aa)). Positions 933 to 996 (AGVLTKGMMV…RLMTKELLSQ (64 aa)) constitute a Tudor domain.

Belongs to the DEAD box helicase family. DEAH subfamily.

The protein localises to the cytoplasm. It catalyses the reaction ATP + H2O = ADP + phosphate + H(+). In terms of biological role, probable ATP-binding RNA helicase which plays a central role during spermatogenesis and oogenesis by repressing transposable elements and preventing their mobilization, which is essential for the germline integrity. Acts via the piRNA metabolic process, which mediates the repression of transposable elements during meiosis by forming complexes composed of piRNAs and Piwi and govern the methylation and subsequent repression of transposons. Involved in the repression of LTR retrotransposon copia. Also involved in telomere regulation by repressing specialized telomeric retroelements HeT-A, TAHRE, and TART; Drosophila telomeres being maintained by transposition of specialized telomeric retroelements. Involved in telomeric trans-silencing, a repression mechanism by which a transposon or a transgene inserted in subtelomeric heterochromatin has the capacity to repress in trans in the female germline, a homologous transposon, or transgene located in euchromatin. Involved in the repression of testis-expressed Stellate genes by the homologous Su(Ste) repeats. Required for anteroposterior and dorsoventral axis formation during oogenesis. The chain is Probable ATP-dependent RNA helicase spindle-E (spn-E) from Drosophila ananassae (Fruit fly).